Consider the following 130-residue polypeptide: Histone H2A type 1-K (130 aa).

The interval Met1 to Ala22 is disordered. Residue Ser2 is modified to N-acetylserine. At Ser2 the chain carries Phosphoserine; by RPS6KA5. The residue at position 4 (Arg4) is a Citrulline; alternate. Arg4 is modified (symmetric dimethylarginine; by PRMT5; alternate). N6-(2-hydroxyisobutyryl)lysine; alternate is present on residues Lys6 and Lys10. The residue at position 6 (Lys6) is an N6-(beta-hydroxybutyryl)lysine; alternate. N6-acetyllysine; alternate is present on residues Lys6 and Lys10. Over residues Gln7 to Ser19 the composition is skewed to basic residues. Lys10 is subject to N6-lactoyllysine; alternate. Lys10 is modified (N6-succinyllysine; alternate). Glycyl lysine isopeptide (Lys-Gly) (interchain with G-Cter in ubiquitin) cross-links involve residues Lys14 and Lys16. At Lys37 the chain carries N6-(2-hydroxyisobutyryl)lysine; alternate. Lys37 bears the N6-(beta-hydroxybutyryl)lysine; alternate mark. Position 37 is an N6-crotonyllysine; alternate (Lys37). Residues Lys75 and Lys76 each carry the N6-(2-hydroxyisobutyryl)lysine modification. At Lys96 the chain carries N6-(2-hydroxyisobutyryl)lysine; alternate. At Lys96 the chain carries N6-succinyllysine; alternate. Lys96 is modified (N6-glutaryllysine; alternate). Residue Gln105 is modified to N5-methylglutamine. Lys119 bears the N6-(2-hydroxyisobutyryl)lysine; alternate mark. Lys119 and Lys120 each carry N6-crotonyllysine; alternate. 2 positions are modified to N6-glutaryllysine; alternate: Lys119 and Lys120. Lys120 carries the N6-(beta-hydroxybutyryl)lysine; alternate modification. Lys120 is covalently cross-linked (Glycyl lysine isopeptide (Lys-Gly) (interchain with G-Cter in ubiquitin); alternate). Thr121 carries the phosphothreonine; by DCAF1 modification. Lys126 carries the post-translational modification N6-(beta-hydroxybutyryl)lysine; alternate. Lys126 is modified (N6-crotonyllysine; alternate). N6-glutaryllysine; alternate is present on Lys126.

It belongs to the histone H2A family. As to quaternary structure, the nucleosome is a histone octamer containing two molecules each of H2A, H2B, H3 and H4 assembled in one H3-H4 heterotetramer and two H2A-H2B heterodimers. The octamer wraps approximately 147 bp of DNA. In terms of processing, deiminated on Arg-4 in granulocytes upon calcium entry. Post-translationally, monoubiquitination of Lys-120 (H2AK119Ub) by RING1, TRIM37 and RNF2/RING2 complex gives a specific tag for epigenetic transcriptional repression and participates in X chromosome inactivation of female mammals. It is involved in the initiation of both imprinted and random X inactivation. Ubiquitinated H2A is enriched in inactive X chromosome chromatin. Ubiquitination of H2A functions downstream of methylation of 'Lys-27' of histone H3 (H3K27me). H2AK119Ub by RNF2/RING2 can also be induced by ultraviolet and may be involved in DNA repair. Following DNA double-strand breaks (DSBs), it is ubiquitinated through 'Lys-63' linkage of ubiquitin moieties by the E2 ligase UBE2N and the E3 ligases RNF8 and RNF168, leading to the recruitment of repair proteins to sites of DNA damage. Ubiquitination at Lys-14 and Lys-16 (H2AK13Ub and H2AK15Ub, respectively) in response to DNA damage is initiated by RNF168 that mediates monoubiquitination at these 2 sites, and 'Lys-63'-linked ubiquitin are then conjugated to monoubiquitin; RNF8 is able to extend 'Lys-63'-linked ubiquitin chains in vitro. Deubiquitinated by USP51 at Lys-14 and Lys-16 (H2AK13Ub and H2AK15Ub, respectively) after damaged DNA is repaired. H2AK119Ub and ionizing radiation-induced 'Lys-63'-linked ubiquitination (H2AK13Ub and H2AK15Ub) are distinct events. Phosphorylation on Ser-2 (H2AS1ph) is enhanced during mitosis. Phosphorylation on Ser-2 by RPS6KA5/MSK1 directly represses transcription. Acetylation of H3 inhibits Ser-2 phosphorylation by RPS6KA5/MSK1. Phosphorylation at Thr-121 (H2AT120ph) by DCAF1 is present in the regulatory region of many tumor suppresor genes and down-regulates their transcription. In terms of processing, symmetric dimethylation on Arg-4 by the PRDM1/PRMT5 complex may play a crucial role in the germ-cell lineage. Post-translationally, glutamine methylation at Gln-105 (H2AQ104me) by FBL is specifically dedicated to polymerase I. It is present at 35S ribosomal DNA locus and impairs binding of the FACT complex. Crotonylation (Kcr) is specifically present in male germ cells and marks testis-specific genes in post-meiotic cells, including X-linked genes that escape sex chromosome inactivation in haploid cells. Crotonylation marks active promoters and enhancers and confers resistance to transcriptional repressors. It is also associated with post-meiotically activated genes on autosomes. In terms of processing, hydroxybutyrylation of histones is induced by starvation. Post-translationally, lactylated in macrophages by EP300/P300 by using lactoyl-CoA directly derived from endogenous or exogenous lactate, leading to stimulates gene transcription.

The protein resides in the nucleus. Its subcellular location is the chromosome. In terms of biological role, core component of nucleosome. Nucleosomes wrap and compact DNA into chromatin, limiting DNA accessibility to the cellular machineries which require DNA as a template. Histones thereby play a central role in transcription regulation, DNA repair, DNA replication and chromosomal stability. DNA accessibility is regulated via a complex set of post-translational modifications of histones, also called histone code, and nucleosome remodeling. This Mus musculus (Mouse) protein is Histone H2A type 1-K.